The chain runs to 2006 residues: E3 ubiquitin-protein ligase PRT6 (2006 aa).

The UBR-type zinc finger occupies 119–189; that stretch reads GVCGSVWGQN…PDGFCSNHKG (71 aa). Disordered stretches follow at residues 1167-1186 and 1338-1380; these read LSSS…SDSV and DHQP…AGSD. Over residues 1338–1348 the composition is skewed to basic and acidic residues; that stretch reads DHQPHEAENCS. Residues 1349-1360 are compositionally biased toward polar residues; it reads EKNSVGGPSTLQ. Residues 1364-1377 show a composition bias toward basic and acidic residues; sequence PDIRSRQTSRRPDA. The segment at 1395-1440 adopts an RING-type; degenerate zinc-finger fold; that stretch reads CGHAVHQSCLERYLKSLKERSGRRTVFEGAHIVDLKKKEFLCPVCR.

It belongs to the E3 ubiquitin-protein ligase UBR1-like family.

The enzyme catalyses S-ubiquitinyl-[E2 ubiquitin-conjugating enzyme]-L-cysteine + [acceptor protein]-L-lysine = [E2 ubiquitin-conjugating enzyme]-L-cysteine + N(6)-ubiquitinyl-[acceptor protein]-L-lysine.. Its pathway is protein modification; protein ubiquitination. Functionally, ubiquitin protein ligase which is a component of the N-end rule pathway with arginine specificity, and functions with the arginyltransferases ATE1 and ATE2. Recognizes and binds to proteins bearing specific N-terminal residues that are destabilizing according to the N-end rule, leading to their ubiquitination and subsequent degradation. Does not participate in degradation of proteins with N-terminal Phe or Leu. The N-end rule pathway regulates seed after-ripening, seedling sugar sensitivity, seedling lipid breakdown, and abscisic acid (ABA) sensitivity of germination. The N-end rule pathway regulates various aspects of leaf and shoot development. Involved in the ubiquitination and subsequent degradation of RAP2-12, an activator of hypoxic gene expression. The ubiquitination occurs after the N-arginylation of RAP2-12 by ATE1 or ATE2 under aerobic conditions. The end-rule pathway plays a role in regulating the timing and amplitude of the immune response following infection with the bacterial pathogen Pseudomonas syringae pv tomato. Regulates the biosynthesis of plant-defense metabolites such as glucosinolates, and the biosynthesis and response to the phytohormone jasmonate (JA), which plays a key role in plant immunity. Controls the expression of specific defense-response genes, activates the synthesis pathway for the phytoalexin camalexin, and influences basal resistance to the hemibiotroph pathogen Pseudomonas syringae pv tomato. Coordinates the mobilization of seed storage reserves and regulates the abundance and activities of several proteases following seed germination. This chain is E3 ubiquitin-protein ligase PRT6, found in Arabidopsis thaliana (Mouse-ear cress).